Consider the following 286-residue polypeptide: Ribosomal RNA small subunit methyltransferase H (286 aa).

Residues 17-19 (AGH), D36, F63, D84, and Q91 contribute to the S-adenosyl-L-methionine site.

Belongs to the methyltransferase superfamily. RsmH family.

It localises to the cytoplasm. The enzyme catalyses cytidine(1402) in 16S rRNA + S-adenosyl-L-methionine = N(4)-methylcytidine(1402) in 16S rRNA + S-adenosyl-L-homocysteine + H(+). Specifically methylates the N4 position of cytidine in position 1402 (C1402) of 16S rRNA. The protein is Ribosomal RNA small subunit methyltransferase H of Metamycoplasma arthritidis (strain 158L3-1) (Mycoplasma arthritidis).